The following is a 253-amino-acid chain: 7-carboxy-7-deazaguanine synthase (253 aa).

Residues 12-14 (WQG) and R32 each bind substrate. The region spanning 23–253 (AFGRRQIFVR…FQVHKYLNVL (231 aa)) is the Radical SAM core domain. Positions 36, 40, and 43 each coordinate [4Fe-4S] cluster. Residue S45 participates in Mg(2+) binding. T98 is a binding site for substrate. G100 is a binding site for S-adenosyl-L-methionine.

This sequence belongs to the radical SAM superfamily. 7-carboxy-7-deazaguanine synthase family. As to quaternary structure, homodimer. [4Fe-4S] cluster is required as a cofactor. The cofactor is S-adenosyl-L-methionine. It depends on Mg(2+) as a cofactor.

It catalyses the reaction 6-carboxy-5,6,7,8-tetrahydropterin + H(+) = 7-carboxy-7-deazaguanine + NH4(+). The protein operates within purine metabolism; 7-cyano-7-deazaguanine biosynthesis. In terms of biological role, catalyzes the complex heterocyclic radical-mediated conversion of 6-carboxy-5,6,7,8-tetrahydropterin (CPH4) to 7-carboxy-7-deazaguanine (CDG), a step common to the biosynthetic pathways of all 7-deazapurine-containing compounds. The polypeptide is 7-carboxy-7-deazaguanine synthase (Thermococcus kodakarensis (strain ATCC BAA-918 / JCM 12380 / KOD1) (Pyrococcus kodakaraensis (strain KOD1))).